The primary structure comprises 403 residues: Phosphopentomutase (403 aa).

6 residues coordinate Mn(2+): Asp-13, Asp-298, His-303, Asp-339, His-340, and His-351.

Belongs to the phosphopentomutase family. Mn(2+) is required as a cofactor.

The protein localises to the cytoplasm. It catalyses the reaction 2-deoxy-alpha-D-ribose 1-phosphate = 2-deoxy-D-ribose 5-phosphate. The catalysed reaction is alpha-D-ribose 1-phosphate = D-ribose 5-phosphate. It functions in the pathway carbohydrate degradation; 2-deoxy-D-ribose 1-phosphate degradation; D-glyceraldehyde 3-phosphate and acetaldehyde from 2-deoxy-alpha-D-ribose 1-phosphate: step 1/2. Isomerase that catalyzes the conversion of deoxy-ribose 1-phosphate (dRib-1-P) and ribose 1-phosphate (Rib-1-P) to deoxy-ribose 5-phosphate (dRib-5-P) and ribose 5-phosphate (Rib-5-P), respectively. The polypeptide is Phosphopentomutase (Streptococcus pneumoniae serotype 2 (strain D39 / NCTC 7466)).